Reading from the N-terminus, the 405-residue chain is DNA primase DnaG (405 aa).

The 77-residue stretch at 172 to 248 folds into the Toprim domain; that stretch reads DAIIIVEGRA…HVDYIARAPP (77 aa). 3 residues coordinate Mg(2+): E178, D222, and D224. Residues 279–303 are disordered; it reads ASGERAEAPPQPAQQPQQEQPAPQR. Low complexity predominate over residues 292 to 303; sequence QQPQQEQPAPQR.

Belongs to the archaeal DnaG primase family. In terms of assembly, forms a ternary complex with MCM helicase and DNA. Component of the archaeal exosome complex. Mg(2+) serves as cofactor.

It catalyses the reaction ssDNA + n NTP = ssDNA/pppN(pN)n-1 hybrid + (n-1) diphosphate.. Its function is as follows. RNA polymerase that catalyzes the synthesis of short RNA molecules used as primers for DNA polymerase during DNA replication. Also part of the exosome, which is a complex involved in RNA degradation. Acts as a poly(A)-binding protein that enhances the interaction between heteromeric, adenine-rich transcripts and the exosome. In Pyrobaculum arsenaticum (strain DSM 13514 / JCM 11321 / PZ6), this protein is DNA primase DnaG.